The following is a 477-amino-acid chain: 23S rRNA (uracil(1939)-C(5))-methyltransferase RlmD (477 aa).

The 60-residue stretch at 7–66 (KTENFPPDWLLVESLDLEAQGVAHRADGKVVFIKGALPFELVSANVHRKKNNWEQGVVTA) folds into the TRAM domain. [4Fe-4S] cluster is bound by residues Cys79, Cys89, Cys92, and Cys171. S-adenosyl-L-methionine is bound by residues Gln280, Phe309, Asn314, Glu330, Asn365, and Asp386. Cys432 serves as the catalytic Nucleophile.

The protein belongs to the class I-like SAM-binding methyltransferase superfamily. RNA M5U methyltransferase family. RlmD subfamily.

The catalysed reaction is uridine(1939) in 23S rRNA + S-adenosyl-L-methionine = 5-methyluridine(1939) in 23S rRNA + S-adenosyl-L-homocysteine + H(+). Catalyzes the formation of 5-methyl-uridine at position 1939 (m5U1939) in 23S rRNA. In Albidiferax ferrireducens (strain ATCC BAA-621 / DSM 15236 / T118) (Rhodoferax ferrireducens), this protein is 23S rRNA (uracil(1939)-C(5))-methyltransferase RlmD.